Consider the following 337-residue polypeptide: tRNA-dihydrouridine synthase B (337 aa).

Residues 19 to 21 (PMA) and Gln-73 contribute to the FMN site. The active-site Proton donor is the Cys-103. FMN contacts are provided by residues Lys-142, 203 to 205 (NGD), and 227 to 228 (GR).

It belongs to the Dus family. DusB subfamily. It depends on FMN as a cofactor.

It carries out the reaction a 5,6-dihydrouridine in tRNA + NAD(+) = a uridine in tRNA + NADH + H(+). The enzyme catalyses a 5,6-dihydrouridine in tRNA + NADP(+) = a uridine in tRNA + NADPH + H(+). Functionally, catalyzes the synthesis of 5,6-dihydrouridine (D), a modified base found in the D-loop of most tRNAs, via the reduction of the C5-C6 double bond in target uridines. The chain is tRNA-dihydrouridine synthase B from Pseudomonas syringae pv. tomato (strain ATCC BAA-871 / DC3000).